Here is a 202-residue protein sequence, read N- to C-terminus: uncharacterized protein (202 aa).

The chain crosses the membrane as a helical span at residues 10–30 (TAAIFLLCCTSVIILFTIAVV).

This sequence belongs to the bacterial sugar transferase family.

It localises to the cell membrane. Functionally, may be involved in the production of the exopolysaccharide (EPS) component of the extracellular matrix during biofilm formation. EPS is responsible for the adhesion of chains of cells into bundles. This is an uncharacterized protein from Bacillus subtilis (strain 168).